We begin with the raw amino-acid sequence, 749 residues long: Cytosolic phospholipase A2 (749 aa).

The C2 domain occupies 1–124 (MASIDPYQHI…GEKKQVPFTF (124 aa)). Residues 1–178 (MASIDPYQHI…LRKLLGPEKT (178 aa)) are phospholipid binding. Residues aspartate 40, threonine 41, aspartate 43, asparagine 65, aspartate 93, alanine 94, and asparagine 95 each coordinate Ca(2+). Residues 138-740 (VCSSTDLRFS…NDVEARKLLH (603 aa)) enclose the PLA2c domain. Residue serine 229 is the Nucleophile of the active site. Positions 417–458 (MEEEIENLKPKHILGNDSSDSDDEMQEPKGTENSKAEEEYQR) are disordered. Residues 442–457 (QEPKGTENSKAEEEYQ) show a composition bias toward basic and acidic residues. The active-site Proton acceptor is aspartate 549.

It localises to the cytoplasm. The protein resides in the cytoplasmic vesicle. It catalyses the reaction a 1,2-diacyl-sn-glycero-3-phosphocholine + H2O = a 1-acyl-sn-glycero-3-phosphocholine + a fatty acid + H(+). The enzyme catalyses a 1-acyl-sn-glycero-3-phosphocholine + H2O = sn-glycerol 3-phosphocholine + a fatty acid + H(+). Stimulated by agonists such as ATP, EGF, thrombin and bradykinin as well as by cytosolic Ca(2+). Its function is as follows. Selectively hydrolyzes arachidonyl phospholipids in the sn-2 position releasing arachidonic acid. Together with its lysophospholipid activity, it is implicated in the initiation of the inflammatory response. The sequence is that of Cytosolic phospholipase A2 (pla2g4a) from Xenopus tropicalis (Western clawed frog).